The sequence spans 457 residues: Cysteine desulfurase (457 aa).

5 residues coordinate pyridoxal 5'-phosphate: alanine 127, threonine 128, glutamine 235, serine 255, and histidine 257. Lysine 258 bears the N6-(pyridoxal phosphate)lysine mark. Threonine 295 provides a ligand contact to pyridoxal 5'-phosphate. Residue cysteine 381 is the Cysteine persulfide intermediate of the active site. Residue cysteine 381 coordinates [2Fe-2S] cluster. A Zn(2+)-binding site is contributed by cysteine 381. Cysteine 381 carries the post-translational modification Cysteine persulfide.

Belongs to the class-V pyridoxal-phosphate-dependent aminotransferase family. NifS/IscS subfamily. In terms of assembly, homodimer. Component of the mitochondrial core iron-sulfur cluster (ISC) complex composed of NFS1, LYRM4, NDUFAB1, ISCU, FXN, and FDX2; this complex is a heterohexamer containing two copies of each monomer. Component of cyteine desulfurase complex composed of NFS1, LYRM4 and NDUFAB1; this complex contributes to the activation of cysteine desulfurase activity and NFS1 stabilization. Interacts (homodimer form) with ISCU (D-state); each monomer interacts with the C-terminal regions of each NFS1 monomer. Interacts with HSPA9. Interacts (via homodimer form) with FDX2. Interacts (via homodimer form) with FXN. Interacts with LYRM4. Component of a complex composed of FXN, NFS1, LYRM4 and ISCU. Monomer. Homodimer. Oligomer. Interacts with ISCU. Component of the cysteine desulfurase complex composed of NFS1 and LYRM4; this complex contributes to the activation of cysteine desulfurase activity. Interacts with MOCS3. Pyridoxal 5'-phosphate is required as a cofactor. Post-translationally, N-gluconoylated. In terms of processing, cysteine persulfide intermediate is reduced by thiol-containing molecules like glutathione and L-cysteine. Persulfide reduction is a rate-limiting step of cysteine desulfurase catalytic cycle. In terms of tissue distribution, predominantly expressed in heart and skeletal muscle. Also found in brain, liver and pancreas.

The protein resides in the mitochondrion. It is found in the cytoplasm. Its subcellular location is the nucleus. The protein localises to the cytoskeleton. It localises to the microtubule organizing center. The protein resides in the centrosome. The enzyme catalyses (sulfur carrier)-H + L-cysteine = (sulfur carrier)-SH + L-alanine. The catalysed reaction is L-cysteinyl-[cysteine desulfurase] + L-cysteine = S-sulfanyl-L-cysteinyl-[cysteine desulfurase] + L-alanine. Active only in complex with LYRM4. Functionally, cysteine desulfurase, of the core iron-sulfur cluster (ISC) assembly complex, that catalyzes the desulfuration of L-cysteine to L-alanine, as component of the cysteine desulfurase complex, leading to the formation of a cysteine persulfide intermediate at the active site cysteine residue and participates in the [2Fe-2S] clusters assembly on the scaffolding protein ISCU. The persulfide is then transferred on the flexible Cys loop from the catalytic site of NFS1 to the surface of NFS1. After the NFS1-linked persulfide sulfur is transferred to one of the conserved Cys residues of the scaffold, a reaction assisted by FXN. The core iron-sulfur cluster (ISC) assembly complex is involved in the de novo synthesis of a [2Fe-2S] cluster, the first step of the mitochondrial iron-sulfur protein biogenesis. This process is initiated by the cysteine desulfurase complex (NFS1:LYRM4:NDUFAB1) that produces persulfide which is delivered on the scaffold protein ISCU in a FXN-dependent manner. Then this complex is stabilized by FDX2 which provides reducing equivalents to accomplish the [2Fe-2S] cluster assembly. Finally, the [2Fe-2S] cluster is transferred from ISCU to chaperone proteins, including HSCB, HSPA9 and GLRX5. May catalyze the desulfuration of L-cysteine to L-alanine as component of the cysteine desulfurase complex (NFS1:LYRM4), leading to the formation of a cysteine persulfide intermediate. Acts as a sulfur donor for MOCS3 by transferring the sulfur of the cysteine persulfide intermediate on MOCS3. The sequence is that of Cysteine desulfurase from Homo sapiens (Human).